The following is a 75-amino-acid chain: Small ribosomal subunit protein bS18 (75 aa).

Belongs to the bacterial ribosomal protein bS18 family. As to quaternary structure, part of the 30S ribosomal subunit. Forms a tight heterodimer with protein bS6.

Binds as a heterodimer with protein bS6 to the central domain of the 16S rRNA, where it helps stabilize the platform of the 30S subunit. The polypeptide is Small ribosomal subunit protein bS18 (Psychrobacter sp. (strain PRwf-1)).